The primary structure comprises 587 residues: Thioredoxin domain-containing protein 3 (587 aa).

In terms of domain architecture, Thioredoxin spans 2–119; it reads ASKKREVQLQ…VIALIDEEKK (118 aa). The cysteines at positions 39 and 42 are disulfide-linked. NDK regions lie at residues 157-255, 313-453, and 454-587; these read MAVI…PLEE, VQRT…STLA, and LIKP…NFEN.

The protein in the C-terminal section; belongs to the NDK family. As to quaternary structure, monomer. As to expression, testis-specific.

The protein localises to the cytoplasm. Probably required during the final stages of sperm tail maturation in the testis and/or epididymis, where extensive disulfide bonding of fibrous sheath (FS) proteins occurs. In vitro, it has neither nucleoside diphosphate kinase (NDPK) activity nor reducing activity on disulfide bonds. Exhibits a 3'-5' exonuclease activity with a preference for single-stranded DNA, suggesting roles in DNA proofreading and repair. The protein is Thioredoxin domain-containing protein 3 (Nme8) of Rattus norvegicus (Rat).